Consider the following 219-residue polypeptide: 2-hydroxy-3-keto-5-methylthiopentenyl-1-phosphate phosphatase (219 aa).

It belongs to the HAD-like hydrolase superfamily. MtnX family.

The enzyme catalyses 2-hydroxy-5-methylsulfanyl-3-oxopent-1-enyl phosphate + H2O = 1,2-dihydroxy-5-(methylsulfanyl)pent-1-en-3-one + phosphate. It participates in amino-acid biosynthesis; L-methionine biosynthesis via salvage pathway; L-methionine from S-methyl-5-thio-alpha-D-ribose 1-phosphate: step 4/6. Its function is as follows. Dephosphorylates 2-hydroxy-3-keto-5-methylthiopentenyl-1-phosphate (HK-MTPenyl-1-P) yielding 1,2-dihydroxy-3-keto-5-methylthiopentene (DHK-MTPene). This is 2-hydroxy-3-keto-5-methylthiopentenyl-1-phosphate phosphatase from Bacillus anthracis (strain A0248).